A 197-amino-acid polypeptide reads, in one-letter code: Large ribosomal subunit protein uL11 (197 aa).

Belongs to the universal ribosomal protein uL11 family. As to quaternary structure, part of the ribosomal stalk of the 50S ribosomal subunit. Interacts with L10 and the large rRNA to form the base of the stalk. L10 forms an elongated spine to which L12 dimers bind in a sequential fashion forming a multimeric L10(L12)X complex. One or more lysine residues are methylated.

Its function is as follows. Forms part of the ribosomal stalk which helps the ribosome interact with GTP-bound translation factors. The polypeptide is Large ribosomal subunit protein uL11 (Mycoplasmopsis pulmonis (strain UAB CTIP) (Mycoplasma pulmonis)).